The chain runs to 341 residues: MNPQKIAVLGPGSWGTALSQVLNDNGHEVRIWGNNPEQMAEINEKHTNTRYFKDVVLDEKIKAFDRLDLALEDVDAILFVVPTKVTRLVAKQVAEVLKHKVHILHASKGLEQGTHERISTILEEEIPAQLRGEIVVVSGPSHAEETIVRDITLISAASKDHDEAKYAQAIFSNDYFRLYTNTDVIGVETAGALKNIIAVGAGALHGLGFGDNAKAAIITRGLAEITRLGVAMGAEPLTYSGLSGVGDLIVTGTSIHSRNWRAGDALGRGEKLADIEKNMGMVIEGVSTTKAAFELAQQLGIDMPITETIYKVLYENLDAKTGILDIMRRETRAENEFINNK.

NADPH-binding residues include Ser13, Trp14, and Lys108. Residues Lys108, Gly139, and Ser141 each contribute to the sn-glycerol 3-phosphate site. Ala143 lines the NADPH pocket. Lys194, Asp247, Ser257, Arg258, and Asn259 together coordinate sn-glycerol 3-phosphate. Lys194 acts as the Proton acceptor in catalysis. NADPH is bound at residue Arg258. Positions 282 and 284 each coordinate NADPH.

This sequence belongs to the NAD-dependent glycerol-3-phosphate dehydrogenase family.

The protein localises to the cytoplasm. The enzyme catalyses sn-glycerol 3-phosphate + NAD(+) = dihydroxyacetone phosphate + NADH + H(+). The catalysed reaction is sn-glycerol 3-phosphate + NADP(+) = dihydroxyacetone phosphate + NADPH + H(+). Its pathway is membrane lipid metabolism; glycerophospholipid metabolism. Its function is as follows. Catalyzes the reduction of the glycolytic intermediate dihydroxyacetone phosphate (DHAP) to sn-glycerol 3-phosphate (G3P), the key precursor for phospholipid synthesis. This chain is Glycerol-3-phosphate dehydrogenase [NAD(P)+], found in Lactococcus lactis subsp. lactis (strain IL1403) (Streptococcus lactis).